The sequence spans 810 residues: Fibroblast growth factor receptor 1-A (810 aa).

The first 26 residues, 1–26 (MKMMMIMKTTLLLISVLLTQALQSQG), serve as a signal peptide directing secretion. The Extracellular segment spans residues 27 to 363 (RPAIQDEAPA…TQLPNQTYLE (337 aa)). Ig-like C2-type domains lie at 28-115 (PAIQ…FNIS), 147-235 (PDKM…YQLD), and 244-346 (PILQ…AWLT). A disulfide bridge connects residues Cys-53 and Cys-99. N-linked (GlcNAc...) asparagine glycans are attached at residues Asn-107, Asn-113, Asn-216, Asn-229, Asn-253, Asn-285, Asn-306, Asn-319, and Asn-358. Cys-167 and Cys-219 are oxidised to a cystine. Cys-266 and Cys-330 are joined by a disulfide. The chain crosses the membrane as a helical span at residues 364–384 (VLIYCVGFFLICVMVGTAVLA). The Cytoplasmic portion of the chain corresponds to 385 to 810 (KMHSSAKKSD…PNRGVAFKKR (426 aa)). Tyr-450 is modified (phosphotyrosine; by autocatalysis). A Protein kinase domain is found at 465 to 754 (LVLGKPLGEG…LSMTSNQEYL (290 aa)). ATP contacts are provided by residues 471-477 (LGEGCFG), Lys-501, 549-551 (EFA), and Asn-555. Phosphotyrosine; by autocatalysis occurs at positions 570 and 572. Asp-610 functions as the Proton acceptor in the catalytic mechanism. 2 residues coordinate ATP: Arg-614 and Asp-628. 4 positions are modified to phosphotyrosine; by autocatalysis: Tyr-640, Tyr-641, Tyr-717, and Tyr-753. The tract at residues 787-810 (AGADEPCLPKFPPHPNRGVAFKKR) is disordered.

Belongs to the protein kinase superfamily. Tyr protein kinase family. Fibroblast growth factor receptor subfamily. As to quaternary structure, monomer. Homodimer after ligand binding. Interacts with cnpy1. Post-translationally, autophosphorylated. Binding of FGF family members together with heparan sulfate proteoglycan or heparin promotes receptor dimerization and autophosphorylation on tyrosine residues. Autophosphorylation occurs in trans between the two FGFR molecules present in the dimer and proceeds in a highly ordered manner. Phosphotyrosine residues provide docking sites for interacting proteins and so are crucial for FGFR1 function and its regulation. In terms of processing, ubiquitinated. FGFR1 is rapidly ubiquitinated after autophosphorylation, leading to internalization and degradation. N-glycosylated in the endoplasmic reticulum. The N-glycan chains undergo further maturation to an Endo H-resistant form in the Golgi apparatus. As to expression, initially expressed in adaxial mesoderm with transcripts distinctly localized to the anterior portion of each half-somite. Hereupon, also strongly expressed in the otic vesicles, branchial arches and the brain, especially at the midbrain-hindbrain boundary (MHB).

The protein resides in the cell membrane. Its subcellular location is the nucleus. It is found in the cytoplasm. It localises to the cytosol. The protein localises to the cytoplasmic vesicle. It catalyses the reaction L-tyrosyl-[protein] + ATP = O-phospho-L-tyrosyl-[protein] + ADP + H(+). Its activity is regulated as follows. Present in an inactive conformation in the absence of bound ligand. Ligand binding leads to dimerization and activation by sequential autophosphorylation on tyrosine residues. Tyrosine-protein kinase that acts as a cell-surface receptor for fibroblast growth factors and plays an essential role in the regulation of embryonic development, cell proliferation, differentiation and migration. Required for normal mesoderm patterning and normal skeletogenesis. Phosphorylates PLCG1, FRS2, GAB1 and SHB. Ligand binding leads to the activation of several signaling cascades. Activation of PLCG1 leads to the production of the cellular signaling molecules diacylglycerol and inositol-1,4,5-trisphosphate. Phosphorylation of FRS2 triggers recruitment of GRB2, GAB1, PIK3R1 and SOS1, and mediates activation of RAS, MAPK1/ERK2, MAPK3/ERK1 and the MAP kinase signaling pathway, as well as of the AKT1 signaling pathway. Promotes phosphorylation of SHC1, STAT1 and PTPN11/SHP2. In the nucleus, enhances RPS6KA1 and CREB1 activity and contributes to the regulation of transcription. FGFR1 signaling is down-regulated by ubiquitination, internalization and degradation. In Danio rerio (Zebrafish), this protein is Fibroblast growth factor receptor 1-A (fgfr1a).